The primary structure comprises 82 residues: MGFRLPGIRKASKAADAPKGYLAVYVGEKLKRFVIPVSYLNQPSFQDLLSQAEEEFGYDHPMGGLTIPCSEDVFQCITSCLN.

Belongs to the ARG7 family.

This Glycine max (Soybean) protein is Auxin-induced protein 15A.